Here is a 465-residue protein sequence, read N- to C-terminus: MTPVRMQHSLAGQTYAVPLIQPDLRREEAVQQMADALQYLQKVSGDIFSRISQQVEQSRSQVQAIGEKVSLAQAKIEKIKGSKKAIKVFSSAKYPAPERLQEYGSIFTGAQDPGLQRRPRHRIQSKHRPLDERALQEKLKDFPVCVSTKPEPEDDAEEGLGGLPSNISSVSSLLLFNTTENLYKKYVFLDPLAGAVTKTHVMLGAETEEKLFDAPLSISKREQLEQQVPENYFYVPDLGQVPEIDVPSYLPDLPGIANDLMYIADLGPGIAPSAPGTIPELPTFHTEVAEPLKVDLQDGVLTPPPPPPPPPPAPEVLASAPPLPPSTAAPVGQGARQDDSSSSASPSVQGAPREVVDPSGGRATLLESIRQAGGIGKAKLRSMKERKLEKKKQKEQEQVRATSQGGHLMSDLFNKLVMRRKGISGKGPGAGEGPGGAFARVSDSIPPLPPPQQPQAEEDEDDWES.

Residues 1–54 (MTPVRMQHSLAGQTYAVPLIQPDLRREEAVQQMADALQYLQKVSGDIFSRISQQ) form a required for WASH complex assembly region. Residues 1 to 167 (MTPVRMQHSL…EGLGGLPSNI (167 aa)) form a WHD1 region. Residue Lys220 forms a Glycyl lysine isopeptide (Lys-Gly) (interchain with G-Cter in ubiquitin) linkage. 2 disordered regions span residues 297–407 (QDGV…QGGH) and 422–465 (GISG…DWES). A compositionally biased stretch (pro residues) spans 302–314 (TPPPPPPPPPPAP). A VCA region spans residues 349 to 465 (QGAPREVVDP…AEEDEDDWES (117 aa)). Residues 361-383 (GRATLLESIRQAGGIGKAKLRSM) form the WH2 domain. Residues 382-398 (SMKERKLEKKKQKEQEQ) show a composition bias toward basic and acidic residues. Residues 424 to 436 (SGKGPGAGEGPGG) show a composition bias toward gly residues. The span at 456–465 (AEEDEDDWES) shows a compositional bias: acidic residues.

The protein belongs to the WASH1 family. Component of the WASH core complex also described as WASH regulatory complex (SHRC) composed of WASH (WASHC1, WASH2P or WASH3P), WASHC2 (WASHC2A or WASHC2C), WASHC3, WASHC4 and WASHC5. The WASH core complex associates with the F-actin-capping protein dimer (formed by CAPZA1, CAPZA2 or CAPZA3 and CAPZB) in a transient or substoichiometric manner which was initially described as WASH complex. Interacts (via WHD1 region) with WASHC2C; the interaction is direct. Interacts with alpha-tubulin. Interacts with BECN1; WASHC1 and AMBRA1 can competitively interact with BECN1. Interacts with BLOC1S2; may associate with the BLOC-1 complex. Interacts with tubulin gamma chain (TUBG1 or TUBG2). Interacts with EXOC1, EXOC4, EXOC8; in MMP14-positive endosomes in breast tumor cells; indicative for an association with the exocyst complex.

It is found in the early endosome membrane. It localises to the recycling endosome membrane. Its subcellular location is the late endosome. The protein resides in the cytoplasmic vesicle. The protein localises to the autophagosome. It is found in the cytoplasm. It localises to the cytoskeleton. Its subcellular location is the microtubule organizing center. The protein resides in the centrosome. The protein localises to the centriole. In terms of biological role, acts as a nucleation-promoting factor at the surface of endosomes, where it recruits and activates the Arp2/3 complex to induce actin polymerization, playing a key role in the fission of tubules that serve as transport intermediates during endosome sorting. Involved in endocytic trafficking of EGF. Involved in transferrin receptor recycling. Regulates the trafficking of endosomal alpha5beta1 integrin to the plasma membrane and involved in invasive cell migration. In T-cells involved in endosome-to-membrane recycling of receptors including T-cell receptor (TCR), CD28 and ITGAL; proposed to be implicated in T-cell proliferation and effector function. In dendritic cells involved in endosome-to-membrane recycling of major histocompatibility complex (MHC) class II probably involving retromer and subsequently allowing antigen sampling, loading and presentation during T-cell activation. Involved in Arp2/3 complex-dependent actin assembly driving Salmonella typhimurium invasion independent of ruffling. Involved in the exocytosis of MMP14 leading to matrix remodeling during invasive migration and implicating late endosome-to-plasma membrane tubular connections and cooperation with the exocyst complex. Involved in negative regulation of autophagy independently from its role in endosomal sorting by inhibiting BECN1 ubiquitination to inactivate PIK3C3/Vps34 activity. The chain is WAS protein family homolog 2 (WASH2P) from Homo sapiens (Human).